The following is a 385-amino-acid chain: Alkanesulfonate monooxygenase 2 (385 aa).

This sequence belongs to the SsuD family.

The catalysed reaction is an alkanesulfonate + FMNH2 + O2 = an aldehyde + FMN + sulfite + H2O + 2 H(+). Its function is as follows. Catalyzes the desulfonation of aliphatic sulfonates. This Mesorhizobium japonicum (strain LMG 29417 / CECT 9101 / MAFF 303099) (Mesorhizobium loti (strain MAFF 303099)) protein is Alkanesulfonate monooxygenase 2 (ssuD2).